Here is an 872-residue protein sequence, read N- to C-terminus: F-box protein pof6 (872 aa).

The F-box domain maps to 30 to 75 (FGCLTINIYLKIFTLISTPDLCNCRLVCRKFQQLCDYNSIYVKKLL). A disordered region spans residues 101–122 (MSSNTSKGFHLQSSDKKYADSD). A compositionally biased stretch (basic and acidic residues) spans 113 to 122 (SSDKKYADSD).

As to quaternary structure, interacts with skp1. Forms a complex with pof6 and skp1.

The protein resides in the cytoplasm. Its subcellular location is the nucleus. Its function is as follows. Together with skp1, essential for septum processing and cell separation. This Schizosaccharomyces pombe (strain 972 / ATCC 24843) (Fission yeast) protein is F-box protein pof6 (pof6).